Reading from the N-terminus, the 94-residue chain is Co-chaperonin GroES (94 aa).

The protein belongs to the GroES chaperonin family. In terms of assembly, heptamer of 7 subunits arranged in a ring. Interacts with the chaperonin GroEL.

The protein localises to the cytoplasm. In terms of biological role, together with the chaperonin GroEL, plays an essential role in assisting protein folding. The GroEL-GroES system forms a nano-cage that allows encapsulation of the non-native substrate proteins and provides a physical environment optimized to promote and accelerate protein folding. GroES binds to the apical surface of the GroEL ring, thereby capping the opening of the GroEL channel. The chain is Co-chaperonin GroES from Acetivibrio thermocellus (strain ATCC 27405 / DSM 1237 / JCM 9322 / NBRC 103400 / NCIMB 10682 / NRRL B-4536 / VPI 7372) (Clostridium thermocellum).